A 72-amino-acid chain; its full sequence is Heat-stable enterotoxin C (72 aa).

A signal peptide spans Met-1 to Gly-19. Disulfide bonds link Cys-60–Cys-65, Cys-61–Cys-69, and Cys-64–Cys-72.

The protein belongs to the heat-stable enterotoxin family.

The protein localises to the secreted. Its function is as follows. Toxin which activates the particulate form of guanylate cyclase and increases cyclic GMP levels within the host intestinal epithelial cells. Highly toxic. The chain is Heat-stable enterotoxin C (ystC) from Yersinia enterocolitica.